The sequence spans 392 residues: Putative nickel insertion protein (392 aa).

Belongs to the LarC family.

The sequence is that of Putative nickel insertion protein from Methanothrix thermoacetophila (strain DSM 6194 / JCM 14653 / NBRC 101360 / PT) (Methanosaeta thermophila).